Reading from the N-terminus, the 316-residue chain is Ribosomal protein L11 methyltransferase (316 aa).

S-adenosyl-L-methionine contacts are provided by Thr-160, Gly-181, Asp-203, and Asn-246.

It belongs to the methyltransferase superfamily. PrmA family.

The protein resides in the cytoplasm. It carries out the reaction L-lysyl-[protein] + 3 S-adenosyl-L-methionine = N(6),N(6),N(6)-trimethyl-L-lysyl-[protein] + 3 S-adenosyl-L-homocysteine + 3 H(+). Functionally, methylates ribosomal protein L11. This Heliobacterium modesticaldum (strain ATCC 51547 / Ice1) protein is Ribosomal protein L11 methyltransferase.